Here is a 120-residue protein sequence, read N- to C-terminus: Large ribosomal subunit protein eL8 (120 aa).

It belongs to the eukaryotic ribosomal protein eL8 family. As to quaternary structure, part of the 50S ribosomal subunit. Probably part of the RNase P complex.

It localises to the cytoplasm. Its function is as follows. Multifunctional RNA-binding protein that recognizes the K-turn motif in ribosomal RNA, the RNA component of RNase P, box H/ACA, box C/D and box C'/D' sRNAs. This is Large ribosomal subunit protein eL8 from Methanosarcina acetivorans (strain ATCC 35395 / DSM 2834 / JCM 12185 / C2A).